We begin with the raw amino-acid sequence, 1256 residues long: Neuronal cell adhesion molecule (1256 aa).

The N-terminal stretch at 1–29 (MQLKIMPKKKHLSAGGVPLILFLCQMISA) is a signal peptide. At 30-1119 (LDVPLDLVQP…ASRQVDIATQ (1090 aa)) the chain is on the extracellular side. 2 Ig-like C2-type domains span residues 40 to 128 (PTIT…AAVS) and 135 to 229 (PSRS…QPIS). Cystine bridges form between cysteine 62-cysteine 117 and cysteine 161-cysteine 212. Asparagine 77 is a glycosylation site (N-linked (GlcNAc...) asparagine). N-linked (GlcNAc...) asparagine glycans are attached at residues asparagine 217, asparagine 239, asparagine 245, asparagine 270, asparagine 308, and asparagine 371. Ig-like C2-type domains follow at residues 261–350 (PPTF…ISVT), 355–442 (PYWI…AFVN), 448–535 (PRIL…VHLE), and 539–626 (PTRI…AVLR). A disulfide bond links cysteine 286 and cysteine 334. A disulfide bridge links cysteine 376 with cysteine 426. N-linked (GlcNAc...) asparagine glycosylation is found at asparagine 427 and asparagine 501. Intrachain disulfides connect cysteine 470/cysteine 519 and cysteine 561/cysteine 610. 8 N-linked (GlcNAc...) asparagine glycosylation sites follow: asparagine 613, asparagine 710, asparagine 796, asparagine 852, asparagine 987, asparagine 1003, asparagine 1013, and asparagine 1067. 4 Fibronectin type-III domains span residues 643-738 (PPFD…TKAA), 740-837 (PDQN…SGED), 842-944 (APGN…TPEG), and 948-1045 (APSS…VDEA). The helical transmembrane segment at 1120 to 1142 (GWFIGLMCAVALLILILLIVCFI) threads the bilayer. Residues 1143-1256 (RRNKGGKYPV…SPVNAMNSFV (114 aa)) lie on the Cytoplasmic side of the membrane. The span at 1151–1171 (PVKEKEDAHADPEIQPMKEDD) shows a compositional bias: basic and acidic residues. The interval 1151 to 1256 (PVKEKEDAHA…SPVNAMNSFV (106 aa)) is disordered. The residue at position 1173 (threonine 1173) is a Phosphothreonine. Tyrosine 1177 carries the phosphotyrosine modification. At serine 1178 the chain carries Phosphoserine. The span at 1193–1202 (PSDRTVKKED) shows a compositional bias: basic and acidic residues. Phosphoserine is present on residues serine 1203, serine 1206, serine 1223, serine 1242, serine 1243, and serine 1247. Positions 1240-1256 (NESSEAPSPVNAMNSFV) are enriched in polar residues.

This sequence belongs to the immunoglobulin superfamily. L1/neurofascin/NgCAM family. In terms of assembly, constituent of a NFASC/NRCAM/ankyrin-G complex. Detected in a complex with CNTN1 and PTPRB. Interacts with GLDN/gliomedin and MYOC. Detected in sciatic nerve. Detected in brain, especially in the cerebellum Purkinje cell layer, inner granule cell layer and molecular layer (at protein level). Detected in neurons and Schwann cells.

Its subcellular location is the cell membrane. It localises to the cell projection. The protein resides in the axon. It is found in the secreted. Functionally, cell adhesion protein that is required for normal responses to cell-cell contacts in brain and in the peripheral nervous system. Plays a role in neurite outgrowth in response to contactin binding. Plays a role in mediating cell-cell contacts between Schwann cells and axons. Plays a role in the formation and maintenance of the nodes of Ranvier on myelinated axons. Nodes of Ranvier contain clustered sodium channels that are crucial for the saltatory propagation of action potentials along myelinated axons. During development, nodes of Ranvier are formed by the fusion of two heminodes. Required for normal clustering of sodium channels at heminodes; not required for the formation of mature nodes with normal sodium channel clusters. Required, together with GLDN, for maintaining NFASC and sodium channel clusters at mature nodes of Ranvier. The chain is Neuronal cell adhesion molecule (Nrcam) from Mus musculus (Mouse).